The sequence spans 231 residues: Phosphoglycolate phosphatase, plasmid (231 aa).

The Nucleophile role is filled by aspartate 14. Mg(2+)-binding residues include aspartate 14, aspartate 16, and aspartate 175.

This sequence belongs to the HAD-like hydrolase superfamily. CbbY/CbbZ/Gph/YieH family. In terms of assembly, homotrimer. Mg(2+) is required as a cofactor.

The enzyme catalyses 2-phosphoglycolate + H2O = glycolate + phosphate. The protein operates within organic acid metabolism; glycolate biosynthesis; glycolate from 2-phosphoglycolate: step 1/1. In terms of biological role, specifically catalyzes the dephosphorylation of 2-phosphoglycolate. Is involved in the dissimilation of the intracellular 2-phosphoglycolate formed during the DNA repair of 3'-phosphoglycolate ends, a major class of DNA lesions induced by oxidative stress. The chain is Phosphoglycolate phosphatase, plasmid (cbbZP) from Cupriavidus necator (strain ATCC 17699 / DSM 428 / KCTC 22496 / NCIMB 10442 / H16 / Stanier 337) (Ralstonia eutropha).